The sequence spans 218 residues: 3-phospho-D-glycerate guanylyltransferase (218 aa).

Belongs to the CofC family.

The enzyme catalyses (2R)-3-phosphoglycerate + GTP + H(+) = 3-[(R)-glyceryl]-diphospho-5'-guanosine + diphosphate. The protein operates within cofactor biosynthesis; coenzyme F420 biosynthesis. Its function is as follows. Guanylyltransferase that catalyzes the activation of (2R)-3-phosphoglycerate (3PG) as 3-[(R)-glyceryl]-diphospho-5'-guanosine, via the condensation of 3PG with GTP. It is involved in the biosynthesis of a derivative of the hydride carrier cofactor coenzyme F420, 3PG-F420. In Phenylobacterium zucineum (strain HLK1), this protein is 3-phospho-D-glycerate guanylyltransferase.